A 116-amino-acid polypeptide reads, in one-letter code: Venom nerve growth factor (116 aa).

3 disulfides stabilise this stretch: cysteine 14/cysteine 78, cysteine 56/cysteine 106, and cysteine 66/cysteine 108.

The protein belongs to the NGF-beta family. Homodimer; non-covalently linked. Post-translationally, not glycosylated. In terms of tissue distribution, expressed by the venom gland.

It localises to the secreted. In terms of biological role, nerve growth factor is important for the development and maintenance of the sympathetic and sensory nervous systems. It stimulates division and differentiation of sympathetic and embryonic sensory neurons as well as basal forebrain cholinergic neurons in the brain. Its relevance in the snake venom is not clear. However, it has been shown to inhibit metalloproteinase-dependent proteolysis of platelet glycoprotein Ib alpha, suggesting a metalloproteinase inhibition to prevent metalloprotease autodigestion and/or protection against prey proteases. Binds a lipid between the two protein chains in the homodimer. The lipid-bound form promotes histamine relase from mouse mast cells, contrary to the lipid-free form. This is Venom nerve growth factor from Naja naja (Indian cobra).